We begin with the raw amino-acid sequence, 464 residues long: DNA primase DnaG (464 aa).

The Toprim domain maps to 198–272 (DSIIVVEGRA…DVDYVARAPE (75 aa)). Residues Glu204, Asp246, and Asp248 each contribute to the Mg(2+) site. Positions 315–333 (RESEGERQPRQVTKPEPEV) are enriched in basic and acidic residues. Residues 315–351 (RESEGERQPRQVTKPEPEVVKAQPKAETPEEKREPAT) are disordered.

Belongs to the archaeal DnaG primase family. Forms a ternary complex with MCM helicase and DNA. Component of the archaeal exosome complex. Requires Mg(2+) as cofactor.

The catalysed reaction is ssDNA + n NTP = ssDNA/pppN(pN)n-1 hybrid + (n-1) diphosphate.. Its function is as follows. RNA polymerase that catalyzes the synthesis of short RNA molecules used as primers for DNA polymerase during DNA replication. Also part of the exosome, which is a complex involved in RNA degradation. Acts as a poly(A)-binding protein that enhances the interaction between heteromeric, adenine-rich transcripts and the exosome. This is DNA primase DnaG from Thermococcus kodakarensis (strain ATCC BAA-918 / JCM 12380 / KOD1) (Pyrococcus kodakaraensis (strain KOD1)).